A 346-amino-acid polypeptide reads, in one-letter code: Holliday junction branch migration complex subunit RuvB (346 aa).

The interval 1–181 (MSDRNPLIDA…FGIPVRLNFY (181 aa)) is large ATPase domain (RuvB-L). ATP-binding positions include leucine 20, arginine 21, glycine 62, lysine 65, threonine 66, threonine 67, 128-130 (EDF), arginine 171, tyrosine 181, and arginine 218. A Mg(2+)-binding site is contributed by threonine 66. Residues 182–252 (TVEELEYIVR…IADEALSRLE (71 aa)) are small ATPAse domain (RuvB-S). The segment at 255–346 (NRGLDQLDRR…SQYGLFMEDE (92 aa)) is head domain (RuvB-H). DNA-binding residues include arginine 291, arginine 310, and arginine 315.

The protein belongs to the RuvB family. In terms of assembly, homohexamer. Forms an RuvA(8)-RuvB(12)-Holliday junction (HJ) complex. HJ DNA is sandwiched between 2 RuvA tetramers; dsDNA enters through RuvA and exits via RuvB. An RuvB hexamer assembles on each DNA strand where it exits the tetramer. Each RuvB hexamer is contacted by two RuvA subunits (via domain III) on 2 adjacent RuvB subunits; this complex drives branch migration. In the full resolvosome a probable DNA-RuvA(4)-RuvB(12)-RuvC(2) complex forms which resolves the HJ.

Its subcellular location is the cytoplasm. The enzyme catalyses ATP + H2O = ADP + phosphate + H(+). Functionally, the RuvA-RuvB-RuvC complex processes Holliday junction (HJ) DNA during genetic recombination and DNA repair, while the RuvA-RuvB complex plays an important role in the rescue of blocked DNA replication forks via replication fork reversal (RFR). RuvA specifically binds to HJ cruciform DNA, conferring on it an open structure. The RuvB hexamer acts as an ATP-dependent pump, pulling dsDNA into and through the RuvAB complex. RuvB forms 2 homohexamers on either side of HJ DNA bound by 1 or 2 RuvA tetramers; 4 subunits per hexamer contact DNA at a time. Coordinated motions by a converter formed by DNA-disengaged RuvB subunits stimulates ATP hydrolysis and nucleotide exchange. Immobilization of the converter enables RuvB to convert the ATP-contained energy into a lever motion, pulling 2 nucleotides of DNA out of the RuvA tetramer per ATP hydrolyzed, thus driving DNA branch migration. The RuvB motors rotate together with the DNA substrate, which together with the progressing nucleotide cycle form the mechanistic basis for DNA recombination by continuous HJ branch migration. Branch migration allows RuvC to scan DNA until it finds its consensus sequence, where it cleaves and resolves cruciform DNA. In Brucella suis (strain ATCC 23445 / NCTC 10510), this protein is Holliday junction branch migration complex subunit RuvB.